Consider the following 541-residue polypeptide: MPQTKGKPHEEQLEQYKNSQTKPFVLTTSNGAPIFNKKASLTVGPRGPLLLQDVVFLDEMAHFDRERIPERVVHAKGGGAHGFFEVTDDITKYCKADVFSTIGKRTPIFIRFSTVGGELGSADTQRDPRGFAIKFYTEEGNWDLVGNNTPIFFIRDPIFFPNFIHTQKRNPVTHLKDPNMMWDFFSLRPETTHQVMILFGDRGIPDGFRHMDGFGSHTFKLVNKDGNAVYCKFHIKTAQGIRNLPPDVAIKLAGEDPDYSIRDLYDSIENGNYPVWRLMIQVMTFEEAANYRFNPFDITKVWSHKEFPLILVGKIVLNKNPTNYFAEVEQIAFAPSHVVPGIEFSPDKMLQGRLFAYPDTQFHRLGPNYVQLPINCPYRSRAHNTQRDGCFALDYNQGGMPTYHPNSFNGAIERTDVKESAWSVSGDVDRFNGDDEDNFSQPRDLWLKVMDETERARLVDNIADSLKYCKAFIQERAINNFTQVHQDFGNALRNALQKANEAMQKKREEEAEFNAKESVMMPCAIDDRMKNISNLAKYCKY.

Positions 1 to 20 (MPQTKGKPHEEQLEQYKNSQ) are disordered. Catalysis depends on residues histidine 74 and asparagine 147. Tyrosine 357 contributes to the heme binding site.

The protein belongs to the catalase family. The cofactor is heme.

It localises to the peroxisome matrix. It catalyses the reaction 2 H2O2 = O2 + 2 H2O. Functionally, catalyzes the degradation of hydrogen peroxide (H(2)O(2)) generated by peroxisomal oxidases to water and oxygen, thereby protecting cells from the toxic effects of hydrogen peroxide. The sequence is that of Catalase (CAT) from Ascaris suum (Pig roundworm).